The following is a 227-amino-acid chain: Phosphoribosylformylglycinamidine synthase subunit PurQ (227 aa).

Positions 3 to 225 (FAVIVFPGSN…LKQWRETYVV (223 aa)) constitute a Glutamine amidotransferase type-1 domain. The active-site Nucleophile is the Cys86. Residues His194 and Glu196 contribute to the active site.

As to quaternary structure, part of the FGAM synthase complex composed of 1 PurL, 1 PurQ and 2 PurS subunits.

Its subcellular location is the cytoplasm. It carries out the reaction N(2)-formyl-N(1)-(5-phospho-beta-D-ribosyl)glycinamide + L-glutamine + ATP + H2O = 2-formamido-N(1)-(5-O-phospho-beta-D-ribosyl)acetamidine + L-glutamate + ADP + phosphate + H(+). The enzyme catalyses L-glutamine + H2O = L-glutamate + NH4(+). The protein operates within purine metabolism; IMP biosynthesis via de novo pathway; 5-amino-1-(5-phospho-D-ribosyl)imidazole from N(2)-formyl-N(1)-(5-phospho-D-ribosyl)glycinamide: step 1/2. Part of the phosphoribosylformylglycinamidine synthase complex involved in the purines biosynthetic pathway. Catalyzes the ATP-dependent conversion of formylglycinamide ribonucleotide (FGAR) and glutamine to yield formylglycinamidine ribonucleotide (FGAM) and glutamate. The FGAM synthase complex is composed of three subunits. PurQ produces an ammonia molecule by converting glutamine to glutamate. PurL transfers the ammonia molecule to FGAR to form FGAM in an ATP-dependent manner. PurS interacts with PurQ and PurL and is thought to assist in the transfer of the ammonia molecule from PurQ to PurL. The sequence is that of Phosphoribosylformylglycinamidine synthase subunit PurQ from Bacillus anthracis (strain A0248).